The primary structure comprises 601 residues: Phosphomethylpyrimidine synthase (601 aa).

Residues N224, M253, Y282, H318, 338 to 340, 379 to 382, and E418 contribute to the substrate site; these read SRG and DGLR. H422 contacts Zn(2+). Position 445 (Y445) interacts with substrate. H486 is a Zn(2+) binding site. 3 residues coordinate [4Fe-4S] cluster: C566, C569, and C574.

It belongs to the ThiC family. As to quaternary structure, homodimer. Requires [4Fe-4S] cluster as cofactor.

The enzyme catalyses 5-amino-1-(5-phospho-beta-D-ribosyl)imidazole + S-adenosyl-L-methionine = 4-amino-2-methyl-5-(phosphooxymethyl)pyrimidine + CO + 5'-deoxyadenosine + formate + L-methionine + 3 H(+). Its pathway is cofactor biosynthesis; thiamine diphosphate biosynthesis. In terms of biological role, catalyzes the synthesis of the hydroxymethylpyrimidine phosphate (HMP-P) moiety of thiamine from aminoimidazole ribotide (AIR) in a radical S-adenosyl-L-methionine (SAM)-dependent reaction. The protein is Phosphomethylpyrimidine synthase of Xylella fastidiosa (strain 9a5c).